The sequence spans 259 residues: Phosphate import ATP-binding protein PstB (259 aa).

Residues 13 to 254 (IAVKNLNFFY…PTRKETEDYI (242 aa)) enclose the ABC transporter domain. ATP is bound at residue 45-52 (GPSGCGKS).

Belongs to the ABC transporter superfamily. Phosphate importer (TC 3.A.1.7) family. In terms of assembly, the complex is composed of two ATP-binding proteins (PstB), two transmembrane proteins (PstC and PstA) and a solute-binding protein (PstS).

It is found in the cell inner membrane. The enzyme catalyses phosphate(out) + ATP + H2O = ADP + 2 phosphate(in) + H(+). In terms of biological role, part of the ABC transporter complex PstSACB involved in phosphate import. Responsible for energy coupling to the transport system. The chain is Phosphate import ATP-binding protein PstB from Albidiferax ferrireducens (strain ATCC BAA-621 / DSM 15236 / T118) (Rhodoferax ferrireducens).